The primary structure comprises 639 residues: Far upstream element-binding protein 1 (639 aa).

2 disordered regions span residues 1–27 and 40–88; these read MADY…NDAF and KIGG…LPPM. N-acetylalanine is present on Ala2. The segment covering 14–23 has biased composition (gly residues); it reads SAGGGGGGGV. Phosphoserine occurs at positions 48 and 51. Basic and acidic residues predominate over residues 61 to 73; the sequence is RPLEDGDQPDAKK. KH domains follow at residues 95–159, 180–246, and 270–334; these read VMTE…KRLL, NAVQ…KEMV, and NEGI…AEII. A Phosphoserine modification is found at Ser135. Thr148 is modified (phosphothreonine). Arg316, Arg354, Arg356, and Arg358 each carry omega-N-methylarginine. Residues 341–360 form a disordered region; sequence VQAGNPGGPGPGGRGRGRGQ. Gly residues predominate over residues 345-360; the sequence is NPGGPGPGGRGRGRGQ. A KH 4 domain is found at 371 to 438; sequence LQEFNFIVPT…QQIDYARQLI (68 aa). Thr427 carries the phosphothreonine modification. Disordered regions lie at residues 442-527 and 543-574; these read IGGP…GTDP and QAQP…PAGQ. Positions 463-500 are enriched in pro residues; it reads PHGPPGPPGPGTPMGPYNPAPYNPGPPGPAPHGPPAPY. Residues 551 to 568 show a composition bias toward low complexity; that stretch reads PAGAPTTTQTNGQGDQQN. The residue at position 625 (Ser625) is a Phosphoserine.

As to quaternary structure, found in a complex with PUF60 and far upstream element (FUSE) DNA segment. Interacts with PUF60 and JTV1. Ubiquitinated. This targets the protein for proteasome-mediated degradation.

Its subcellular location is the nucleus. Its function is as follows. Regulates MYC expression by binding to a single-stranded far-upstream element (FUSE) upstream of the MYC promoter. May act both as activator and repressor of transcription. The protein is Far upstream element-binding protein 1 of Rattus norvegicus (Rat).